The following is a 546-amino-acid chain: CTP synthase (546 aa).

The tract at residues 1-266 (MTTNYIFVTG…DDLVCQRFGI (266 aa)) is amidoligase domain. S14 is a CTP binding site. S14 contributes to the UTP binding site. Residues 15–20 (SLGKGI) and D72 contribute to the ATP site. 2 residues coordinate Mg(2+): D72 and E140. CTP is bound by residues 147–149 (DIE), 187–192 (KTKPTQ), and K223. Residues 187-192 (KTKPTQ) and K223 each bind UTP. 239–241 (KDV) lines the ATP pocket. In terms of domain architecture, Glutamine amidotransferase type-1 spans 291 to 542 (TIGMVGKYIE…VKAAGENARG (252 aa)). G352 contacts L-glutamine. C379 serves as the catalytic Nucleophile; for glutamine hydrolysis. L-glutamine-binding positions include 380–383 (LGMQ), E403, and R470. Catalysis depends on residues H515 and E517.

The protein belongs to the CTP synthase family. As to quaternary structure, homotetramer.

The catalysed reaction is UTP + L-glutamine + ATP + H2O = CTP + L-glutamate + ADP + phosphate + 2 H(+). It catalyses the reaction L-glutamine + H2O = L-glutamate + NH4(+). The enzyme catalyses UTP + NH4(+) + ATP = CTP + ADP + phosphate + 2 H(+). Its pathway is pyrimidine metabolism; CTP biosynthesis via de novo pathway; CTP from UDP: step 2/2. Allosterically activated by GTP, when glutamine is the substrate; GTP has no effect on the reaction when ammonia is the substrate. The allosteric effector GTP functions by stabilizing the protein conformation that binds the tetrahedral intermediate(s) formed during glutamine hydrolysis. Inhibited by the product CTP, via allosteric rather than competitive inhibition. Functionally, catalyzes the ATP-dependent amination of UTP to CTP with either L-glutamine or ammonia as the source of nitrogen. Regulates intracellular CTP levels through interactions with the four ribonucleotide triphosphates. The sequence is that of CTP synthase from Aliivibrio salmonicida (strain LFI1238) (Vibrio salmonicida (strain LFI1238)).